The sequence spans 414 residues: E3 ubiquitin-protein ligase makorin-2 (414 aa).

2 C3H1-type zinc fingers span residues 2-29 and 31-58; these read STKQ…HDLT and SKPS…HIKP. The tract at residues 57–94 is disordered; it reads KPPGRGSGAPADHSNRSSSSAGASAPGPGPPANTSKHL. The span at 73-82 shows a compositional bias: low complexity; that stretch reads SSSSAGASAP. The C3H1-type 3 zinc-finger motif lies at 164-191; sequence QTSPQICPFLAAGQCQYGESCPYLHGEM. Residues 192–221 are makorin-type Cys-His; sequence CEICRQHVLHPHDPEQRAAHEKKCMVAFEM. Residues 237–291 form an RING-type zinc finger; that stretch reads CKICLDVVYEKSSPSERRFGILSSCAHTYCLNCIRQWRCVEQLHNQIRKSCPECR. A C3H1-type 4 zinc finger spans residues 320–349; that stretch reads GVSKKACKYFDQGRGTCPFGGKCFYMHAYA.

Its subcellular location is the cytoplasm. It is found in the nucleus. The enzyme catalyses S-ubiquitinyl-[E2 ubiquitin-conjugating enzyme]-L-cysteine + [acceptor protein]-L-lysine = [E2 ubiquitin-conjugating enzyme]-L-cysteine + N(6)-ubiquitinyl-[acceptor protein]-L-lysine.. It participates in protein modification; protein ubiquitination. Its function is as follows. E3 ubiquitin ligase catalyzing the covalent attachment of ubiquitin moieties onto substrate proteins. Inhibits neurogenesis and axis formation during embryonic development by modulating the phosphatidylinositol 3-kinase (PI3K) pathway. Acts downstream of PI3K and akt1 to up-regulate gsk3b mRNA expression. In Danio rerio (Zebrafish), this protein is E3 ubiquitin-protein ligase makorin-2 (mkrn2).